The primary structure comprises 311 residues: Methionyl-tRNA formyltransferase (311 aa).

Ser112 to Pro115 provides a ligand contact to (6S)-5,6,7,8-tetrahydrofolate.

Belongs to the Fmt family.

The enzyme catalyses L-methionyl-tRNA(fMet) + (6R)-10-formyltetrahydrofolate = N-formyl-L-methionyl-tRNA(fMet) + (6S)-5,6,7,8-tetrahydrofolate + H(+). Functionally, attaches a formyl group to the free amino group of methionyl-tRNA(fMet). The formyl group appears to play a dual role in the initiator identity of N-formylmethionyl-tRNA by promoting its recognition by IF2 and preventing the misappropriation of this tRNA by the elongation apparatus. The sequence is that of Methionyl-tRNA formyltransferase from Rhizobium etli (strain ATCC 51251 / DSM 11541 / JCM 21823 / NBRC 15573 / CFN 42).